A 463-amino-acid chain; its full sequence is NADH-quinone oxidoreductase subunit N (463 aa).

14 helical membrane-spanning segments follow: residues 5–25 (LLYGLLPEHILLGLILVLMLL), 34–54 (AGSALFIASLLAGAGVLVMQL), 72–92 (FSEIGRLIIVSCGAILGVYSL), 99–119 (KYWILIASSLLGAMIILDSAG), 120–140 (FISLFMGIEILSLPGFALMVL), 154–174 (YLLLSSVATALVLFGLSLVYG), 196–216 (LAASVMILSGFFLKASVFPFH), 230–250 (VTAFLASIVKAAVVLGLVRIL), 259–279 (AVTVIALLSMLSMFYGNITAI), 286–303 (KMLAYSSISHAGYMMFAL), 314–334 (LLYYVAVYAVTTITACACFSI), 356–376 (AILLSLCVLSLAGIPPLPGFL), 393–413 (VAVLAFVASYIGTFFYLGVVL), and 432–452 (LCWTWGGALLGTLALALFMLL).

It belongs to the complex I subunit 2 family. In terms of assembly, NDH-1 is composed of 14 different subunits. Subunits NuoA, H, J, K, L, M, N constitute the membrane sector of the complex.

The protein localises to the cell inner membrane. It catalyses the reaction a quinone + NADH + 5 H(+)(in) = a quinol + NAD(+) + 4 H(+)(out). Its function is as follows. NDH-1 shuttles electrons from NADH, via FMN and iron-sulfur (Fe-S) centers, to quinones in the respiratory chain. The immediate electron acceptor for the enzyme in this species is believed to be ubiquinone. Couples the redox reaction to proton translocation (for every two electrons transferred, four hydrogen ions are translocated across the cytoplasmic membrane), and thus conserves the redox energy in a proton gradient. This is NADH-quinone oxidoreductase subunit N from Pelobacter propionicus (strain DSM 2379 / NBRC 103807 / OttBd1).